The primary structure comprises 506 residues: 2-isopropylmalate synthase (506 aa).

Residues 4–266 (ILFMDTTLRD…QSSIILKEIK (263 aa)) form the Pyruvate carboxyltransferase domain. Aspartate 13, histidine 201, histidine 203, and asparagine 237 together coordinate Mn(2+). The tract at residues 390 to 506 (NIKQLQVHFV…KLKALLTLVK (117 aa)) is regulatory domain.

The protein belongs to the alpha-IPM synthase/homocitrate synthase family. LeuA type 1 subfamily. In terms of assembly, homodimer. The cofactor is Mn(2+).

It is found in the cytoplasm. It carries out the reaction 3-methyl-2-oxobutanoate + acetyl-CoA + H2O = (2S)-2-isopropylmalate + CoA + H(+). It participates in amino-acid biosynthesis; L-leucine biosynthesis; L-leucine from 3-methyl-2-oxobutanoate: step 1/4. Its function is as follows. Catalyzes the condensation of the acetyl group of acetyl-CoA with 3-methyl-2-oxobutanoate (2-ketoisovalerate) to form 3-carboxy-3-hydroxy-4-methylpentanoate (2-isopropylmalate). This is 2-isopropylmalate synthase from Bacillus cytotoxicus (strain DSM 22905 / CIP 110041 / 391-98 / NVH 391-98).